The chain runs to 470 residues: FAD-dependent monooxygenase SAT7 (470 aa).

Residues 28 to 48 (GLSVAIVGGGIVGIALALGLV) form a helical membrane-spanning segment. Glutamate 58, alanine 71, and arginine 143 together coordinate FAD. Catalysis depends on residues arginine 227 and tyrosine 260. 2 residues coordinate FAD: aspartate 351 and alanine 364.

This sequence belongs to the paxM FAD-dependent monooxygenase family. The cofactor is FAD.

It is found in the membrane. The protein operates within mycotoxin biosynthesis. FAD-dependent monooxygenase; part of the satratoxin SC1 cluster involved in the biosynthesis of satratoxins, trichothecene mycotoxins that are associated with human food poisonings. Satratoxins are suggested to be made by products of multiple gene clusters (SC1, SC2 and SC3) that encode 21 proteins in all, including polyketide synthases, acetyltransferases, and other enzymes expected to modify the trichothecene skeleton. SC1 encodes 10 proteins, SAT1 to SAT10. The largest are SAT8, which encodes a putative polyketide synthase (PKS) with a conventional non-reducing architecture, and SAT10, a putative protein containing four ankyrin repeats and thus may be involved in protein scaffolding. The putative short-chain reductase SAT3 may assist the PKS in some capacity. SAT6 contains a secretory lipase domain and acts probably as a trichothecene esterase. SAT5 encodes a putative acetyltransferase, and so, with SAT6, may affect endogenous protection from toxicity. The probable transcription factor SAT9 may regulate the expression of the SC1 cluster. SC2 encodes proteins SAT11 to SAT16, the largest of which encodes the putative reducing PKS SAT13. SAT11 is a cytochrome P450 monooxygenase, while SAT14 and SAT16 are probable acetyltransferases. The SC2 cluster may be regulated by the transcription factor SAT15. SC3 is a small cluster that encodes 5 proteins, SAT17 to SAT21. SAT21 is a putative MFS-type transporter which may have a role in exporting secondary metabolites. The four other proteins putatively encoded in SC3 include the taurine hydroxylase-like protein SAT17, the O-methyltransferase SAT18, the acetyltransferase SAT19, and the Cys6-type zinc finger SAT20, the latter being probably involved in regulation of SC3 expression. The polypeptide is FAD-dependent monooxygenase SAT7 (Stachybotrys chartarum (strain CBS 109288 / IBT 7711) (Toxic black mold)).